The primary structure comprises 183 residues: Potassium-transporting ATPase KdpC subunit (183 aa).

A helical membrane pass occupies residues 11–31; it reads LILLLAVVTGALYPLAVTGVA.

This sequence belongs to the KdpC family. As to quaternary structure, the system is composed of three essential subunits: KdpA, KdpB and KdpC.

It is found in the cell inner membrane. Part of the high-affinity ATP-driven potassium transport (or Kdp) system, which catalyzes the hydrolysis of ATP coupled with the electrogenic transport of potassium into the cytoplasm. This subunit acts as a catalytic chaperone that increases the ATP-binding affinity of the ATP-hydrolyzing subunit KdpB by the formation of a transient KdpB/KdpC/ATP ternary complex. The polypeptide is Potassium-transporting ATPase KdpC subunit (Pseudomonas putida (strain W619)).